The sequence spans 297 residues: Internalin C (297 aa).

An N-terminal signal peptide occupies residues 1–34 (MLKKNNWLQNAVIAMLVLIVGLCINMGSGTKVQA). LRR repeat units follow at residues 74-96 (LSGVQNFNGDNSNIQSLAGMQFF), 97-120 (TNLKELHLSHNQISDLSPLKDLTK), 122-139 (EELSVNRNRLKNLNGIPS), 140-161 (ACLSRLFLDNNELRDTDSLIHL), 162-184 (KNLEILSIRNNKLKSIVMLGFLS), and 186-207 (LEVLDLHGNEITNTGGLTRLKK).

It belongs to the internalin family. As to quaternary structure, interacts in vitro with human intestinal mucin-2 (MUC2) but not with mucin-1; binding is slightly better at pH 5.5, (the pH of the intestine) than at pH 7.4. Interacts with the SH3 6 domain of human DNMBP (Tuba). Interacts with I-kappa-B kinase alpha (IKKA, CHUK).

The protein resides in the secreted. It is found in the host cytoplasm. In terms of biological role, a virulence enhancer that has at least 2 dissociable functions in infection; it impairs translocation of host transcription factor NF-kappa-B to the nucleus and antagonizes the function of the Tuba dynamin-binding protein, promoting bacterial spreading. Perturbs the morphology of host cell junctions by impairing host DNMBP (Tuba) and WASL interaction, altering cortical tension at the cell junctions and allowing bacteria to more efficiently form bacteria-filled cell protrusions which promote bacterial spreading within infected host tissue. Down-regulates the host inflammation response usually induced by Listeria infection. Interacts with host I-kappa-B kinase alpha (IKKA, CHUK), which prevents IKKA from phosphorylating NF-kappa-B inhibitor alpha (IKBA, NFKBIA) and thus delays degradation of phospho-IKBA. Translocation of host transcription factor p65 (a subunit of NF-kappa-B, RELA) into the nucleus is impaired, which prevents activation of NF-KB-regulated genes. Recognized by serum from healthy humans exposed to L.monocytogenes as well from patients who have recovered from listeriosis. The protein is Internalin C of Listeria monocytogenes serotype 1/2a (strain EGD / Mackaness).